The sequence spans 345 residues: NADH-quinone oxidoreductase subunit H (345 aa).

Transmembrane regions (helical) follow at residues 13 to 33 (VIIL…LLFL), 84 to 104 (FILA…VIPF), 115 to 135 (VAIL…IMGG), 161 to 181 (IGLI…GDIV), 190 to 210 (LFNW…ISCL), 248 to 268 (YIAI…GWLS), 277 to 297 (PLWM…VKAI), and 309 to 329 (LGWK…AFAA).

It belongs to the complex I subunit 1 family. As to quaternary structure, NDH-1 is composed of 14 different subunits. Subunits NuoA, H, J, K, L, M, N constitute the membrane sector of the complex.

The protein resides in the cell inner membrane. The enzyme catalyses a quinone + NADH + 5 H(+)(in) = a quinol + NAD(+) + 4 H(+)(out). NDH-1 shuttles electrons from NADH, via FMN and iron-sulfur (Fe-S) centers, to quinones in the respiratory chain. The immediate electron acceptor for the enzyme in this species is believed to be ubiquinone. Couples the redox reaction to proton translocation (for every two electrons transferred, four hydrogen ions are translocated across the cytoplasmic membrane), and thus conserves the redox energy in a proton gradient. This subunit may bind ubiquinone. This is NADH-quinone oxidoreductase subunit H from Ruegeria sp. (strain TM1040) (Silicibacter sp.).